Here is a 336-residue protein sequence, read N- to C-terminus: Nicotinate-nucleotide--dimethylbenzimidazole phosphoribosyltransferase (336 aa).

E304 (proton acceptor) is an active-site residue.

Belongs to the CobT family.

It carries out the reaction 5,6-dimethylbenzimidazole + nicotinate beta-D-ribonucleotide = alpha-ribazole 5'-phosphate + nicotinate + H(+). The protein operates within nucleoside biosynthesis; alpha-ribazole biosynthesis; alpha-ribazole from 5,6-dimethylbenzimidazole: step 1/2. Its function is as follows. Catalyzes the synthesis of alpha-ribazole-5'-phosphate from nicotinate mononucleotide (NAMN) and 5,6-dimethylbenzimidazole (DMB). The protein is Nicotinate-nucleotide--dimethylbenzimidazole phosphoribosyltransferase of Mesorhizobium japonicum (strain LMG 29417 / CECT 9101 / MAFF 303099) (Mesorhizobium loti (strain MAFF 303099)).